The sequence spans 252 residues: Ribonuclease 3 (252 aa).

The region spanning leucine 3–glycine 125 is the RNase III domain. Residue glutamate 38 participates in Mg(2+) binding. Aspartate 42 is a catalytic residue. Mg(2+) contacts are provided by aspartate 111 and glutamate 114. Residue glutamate 114 is part of the active site. Positions aspartate 152–alanine 222 constitute a DRBM domain.

Belongs to the ribonuclease III family. Homodimer. It depends on Mg(2+) as a cofactor.

It is found in the cytoplasm. It catalyses the reaction Endonucleolytic cleavage to 5'-phosphomonoester.. Its function is as follows. Digests double-stranded RNA. Involved in the processing of primary rRNA transcript to yield the immediate precursors to the large and small rRNAs (23S and 16S). Processes some mRNAs, and tRNAs when they are encoded in the rRNA operon. Processes pre-crRNA and tracrRNA of type II CRISPR loci if present in the organism. This chain is Ribonuclease 3, found in Bordetella petrii (strain ATCC BAA-461 / DSM 12804 / CCUG 43448).